A 785-amino-acid chain; its full sequence is Endonuclease MutS2 (785 aa).

335 to 342 (GPNTGGKT) provides a ligand contact to ATP. In terms of domain architecture, Smr spans 710-785 (LDLRGERYED…GNGVTIVEFK (76 aa)).

Belongs to the DNA mismatch repair MutS family. MutS2 subfamily. Homodimer. Binds to stalled ribosomes, contacting rRNA.

Endonuclease that is involved in the suppression of homologous recombination and thus may have a key role in the control of bacterial genetic diversity. Functionally, acts as a ribosome collision sensor, splitting the ribosome into its 2 subunits. Detects stalled/collided 70S ribosomes which it binds and splits by an ATP-hydrolysis driven conformational change. Acts upstream of the ribosome quality control system (RQC), a ribosome-associated complex that mediates the extraction of incompletely synthesized nascent chains from stalled ribosomes and their subsequent degradation. Probably generates substrates for RQC. The protein is Endonuclease MutS2 of Listeria welshimeri serovar 6b (strain ATCC 35897 / DSM 20650 / CCUG 15529 / CIP 8149 / NCTC 11857 / SLCC 5334 / V8).